Reading from the N-terminus, the 382-residue chain is Queuine tRNA-ribosyltransferase (382 aa).

Residue Asp93 is the Proton acceptor of the active site. Substrate-binding positions include Asp93–Phe97, Asp147, Gln191, and Gly218. Residues Gly249–Asp255 are RNA binding. The active-site Nucleophile is the Asp268. Positions Thr273 to Arg277 are RNA binding; important for wobble base 34 recognition. 4 residues coordinate Zn(2+): Cys306, Cys308, Cys311, and His337.

Belongs to the queuine tRNA-ribosyltransferase family. Homodimer. Within each dimer, one monomer is responsible for RNA recognition and catalysis, while the other monomer binds to the replacement base PreQ1. Requires Zn(2+) as cofactor.

The enzyme catalyses 7-aminomethyl-7-carbaguanine + guanosine(34) in tRNA = 7-aminomethyl-7-carbaguanosine(34) in tRNA + guanine. The protein operates within tRNA modification; tRNA-queuosine biosynthesis. Its function is as follows. Catalyzes the base-exchange of a guanine (G) residue with the queuine precursor 7-aminomethyl-7-deazaguanine (PreQ1) at position 34 (anticodon wobble position) in tRNAs with GU(N) anticodons (tRNA-Asp, -Asn, -His and -Tyr). Catalysis occurs through a double-displacement mechanism. The nucleophile active site attacks the C1' of nucleotide 34 to detach the guanine base from the RNA, forming a covalent enzyme-RNA intermediate. The proton acceptor active site deprotonates the incoming PreQ1, allowing a nucleophilic attack on the C1' of the ribose to form the product. After dissociation, two additional enzymatic reactions on the tRNA convert PreQ1 to queuine (Q), resulting in the hypermodified nucleoside queuosine (7-(((4,5-cis-dihydroxy-2-cyclopenten-1-yl)amino)methyl)-7-deazaguanosine). The protein is Queuine tRNA-ribosyltransferase of Haemophilus influenzae (strain ATCC 51907 / DSM 11121 / KW20 / Rd).